Reading from the N-terminus, the 390-residue chain is MGNLCSLFTPPKPVKKRKPITKRQSSIGASSSGSGLNSNRWNNRVRSSSSRRDNKFEDALIQEHALAAAAVLFRQQNGGGGSLPFDRSASQRYQGSCSKKNQLPRSSSSRSRSSTDPLLQPHQFLNQGIKLDDLETNHFVLVHGGSFGAWCWYKTIALLEEDGFKVTAIDLAGCGINSININGIASLSQYVKPLTDILEKLPIGEKVILVGHDFGGACISYAMELFPSKISKAVFLAAAMLTNGQSTLDMFSLKAGQNDLMRKAQIFIYTNGNENPPTAIDLDKSLLKDLLFNQSPSKDVALASVSMRSIPFAPVLEKLSLSDANYGSVRRYYIETLEDNAIPVTLQENMINSSPPEKVYRLKGADHAPFFSKPQALHKLLLEIARISPA.

Residues 1 to 46 (MGNLCSLFTPPKPVKKRKPITKRQSSIGASSSGSGLNSNRWNNRVR) constitute a chloroplast transit peptide. Disordered regions lie at residues 1–52 (MGNL…SSRR) and 94–119 (QGSC…DPLL). Residues 25–48 (SSIGASSSGSGLNSNRWNNRVRSS) are compositionally biased toward low complexity. The segment covering 94 to 104 (QGSCSKKNQLP) has biased composition (polar residues). Over residues 105-114 (RSSSSRSRSS) the composition is skewed to low complexity. Positions 137-241 (NHFVLVHGGS…KAVFLAAAML (105 aa)) constitute an AB hydrolase-1 domain. Asp-213 (acyl-ester intermediate) is an active-site residue. Active-site charge relay system residues include Asp-339 and His-367.

The protein belongs to the AB hydrolase superfamily. Methylesterase family.

It localises to the plastid. Its subcellular location is the chloroplast. Its function is as follows. Putative methylesterase. The sequence is that of Putative methylesterase 11, chloroplastic from Arabidopsis thaliana (Mouse-ear cress).